A 540-amino-acid polypeptide reads, in one-letter code: Chaperonin GroEL (540 aa).

ATP contacts are provided by residues 29–32 (TLGP), 86–90 (DGTTT), Gly-413, 476–478 (NAA), and Asp-492.

The protein belongs to the chaperonin (HSP60) family. As to quaternary structure, forms a cylinder of 14 subunits composed of two heptameric rings stacked back-to-back. Interacts with the co-chaperonin GroES.

The protein localises to the cytoplasm. It catalyses the reaction ATP + H2O + a folded polypeptide = ADP + phosphate + an unfolded polypeptide.. Functionally, together with its co-chaperonin GroES, plays an essential role in assisting protein folding. The GroEL-GroES system forms a nano-cage that allows encapsulation of the non-native substrate proteins and provides a physical environment optimized to promote and accelerate protein folding. The chain is Chaperonin GroEL from Streptococcus sanguinis.